The chain runs to 54 residues: uncharacterized protein (54 aa).

This is an uncharacterized protein from Dictyostelium discoideum (Social amoeba).